We begin with the raw amino-acid sequence, 315 residues long: BTB/POZ domain-containing adapter for CUL3-mediated RhoA degradation protein 3 (315 aa).

Methionine 1 is modified (N-acetylmethionine). Position 23 is a phosphoserine (serine 23). The region spanning 32-100 is the BTB domain; sequence KYVKLNVGGA…LRDGAVPLPE (69 aa). Residues 239–245 carry the Interaction with PCNA motif; it reads QTKVEFP. A disordered region spans residues 269–294; it reads NALLEATGGAAGRSHHLDEDEERERE.

It belongs to the BACURD family. In terms of assembly, homotetramer; forms a two-fold symmetric tetramer in solution. Interacts with CUL3; interaction is direct and forms a 5:5 heterodecamer. Component of the BCR(BACURD3) E3 ubiquitin ligase complex, at least composed of CUL3, KCTD10/BACURD3 and RBX1. Interacts with DNA polymerase delta subunit 2/POLD2. Interacts with PCNA. As to expression, expressed at highest levels in lung. Also detected in testis and heart. Very low expression, if any, in brain, liver, spleen, kidney and skeletal muscle.

It localises to the nucleus. It functions in the pathway protein modification; protein ubiquitination. Substrate-specific adapter of a BCR (BTB-CUL3-RBX1) E3 ubiquitin-protein ligase complex. The BCR(BACURD3) E3 ubiquitin ligase complex mediates the ubiquitination of target proteins, leading to their degradation by the proteasome. The chain is BTB/POZ domain-containing adapter for CUL3-mediated RhoA degradation protein 3 (Kctd10) from Rattus norvegicus (Rat).